The following is a 367-amino-acid chain: Heme A synthase (367 aa).

5 helical membrane-spanning segments follow: residues 25–45, 111–131, 139–159, 174–194, and 210–230; these read ALRFWLGFVLLALFCLVLVGG, LIARGIGVIFALPLLYFWLTG, WPLVGILALGGLQGFIGWWMV, LATHLVMACLIFAGCMWIMRG, and GFAATIAIFALFQIYLGALVA. His-274 provides a ligand contact to heme. The next 3 helical transmembrane spans lie at 276–296, 305–325, and 327–347; these read IGAYTLFALTLINMVIALRAA, AVVLFSLVTLQAAIGIATLLM, and VPLHWGLLHQAGALVVFGFAI. Heme is bound at residue His-335.

This sequence belongs to the COX15/CtaA family. Type 2 subfamily. In terms of assembly, interacts with CtaB. It depends on heme b as a cofactor.

Its subcellular location is the cell membrane. It catalyses the reaction Fe(II)-heme o + 2 A + H2O = Fe(II)-heme a + 2 AH2. It participates in porphyrin-containing compound metabolism; heme A biosynthesis; heme A from heme O: step 1/1. In terms of biological role, catalyzes the conversion of heme O to heme A by two successive hydroxylations of the methyl group at C8. The first hydroxylation forms heme I, the second hydroxylation results in an unstable dihydroxymethyl group, which spontaneously dehydrates, resulting in the formyl group of heme A. The polypeptide is Heme A synthase (Rhizobium leguminosarum bv. trifolii (strain WSM2304)).